Consider the following 152-residue polypeptide: Protein D1 (152 aa).

It belongs to the phosphatidylethanolamine-binding protein family.

The protein is Protein D1 (D1) of Onchocerca volvulus.